Here is a 208-residue protein sequence, read N- to C-terminus: Small ribosomal subunit protein uS4 (208 aa).

The S4 RNA-binding domain maps to 98-159 (RRLDNVVYRL…KSRNVAAISE (62 aa)).

Belongs to the universal ribosomal protein uS4 family. Part of the 30S ribosomal subunit. Contacts protein S5. The interaction surface between S4 and S5 is involved in control of translational fidelity.

In terms of biological role, one of the primary rRNA binding proteins, it binds directly to 16S rRNA where it nucleates assembly of the body of the 30S subunit. With S5 and S12 plays an important role in translational accuracy. This is Small ribosomal subunit protein uS4 from Trichlorobacter lovleyi (strain ATCC BAA-1151 / DSM 17278 / SZ) (Geobacter lovleyi).